Reading from the N-terminus, the 394-residue chain is Chorismate synthase (394 aa).

Residues Arg-40 and Arg-46 each coordinate NADP(+). FMN-binding positions include 135–137 (RAS), 255–256 (QA), Gly-302, 317–321 (KPISS), and Arg-343.

This sequence belongs to the chorismate synthase family. Homotetramer. FMNH2 serves as cofactor.

The catalysed reaction is 5-O-(1-carboxyvinyl)-3-phosphoshikimate = chorismate + phosphate. Its pathway is metabolic intermediate biosynthesis; chorismate biosynthesis; chorismate from D-erythrose 4-phosphate and phosphoenolpyruvate: step 7/7. Functionally, catalyzes the anti-1,4-elimination of the C-3 phosphate and the C-6 proR hydrogen from 5-enolpyruvylshikimate-3-phosphate (EPSP) to yield chorismate, which is the branch point compound that serves as the starting substrate for the three terminal pathways of aromatic amino acid biosynthesis. This reaction introduces a second double bond into the aromatic ring system. The chain is Chorismate synthase from Frankia alni (strain DSM 45986 / CECT 9034 / ACN14a).